Consider the following 495-residue polypeptide: Internal alternative NAD(P)H-ubiquinone oxidoreductase A1, mitochondrial (495 aa).

Residues 1–41 constitute a mitochondrion transit peptide; sequence MPWFKNLIKISKTITNQSSSYKSITPLASPLLTQFLQFTKQ. 61-91 contributes to the FAD binding site; sequence RIVVLGSGWAGCRLMKDIDTNIYDVVCVSPR. 228 to 264 lines the NAD(+) pocket; the sequence is LHCVVVGGGPTGVEFSGELSDFILKDVHQRYAHVKDY. Residues 486–495 carry the Microbody targeting signal motif; that stretch reads LVFGRDISRI.

The protein belongs to the NADH dehydrogenase family. It depends on FAD as a cofactor.

Its subcellular location is the mitochondrion inner membrane. It localises to the peroxisome. The enzyme catalyses a quinone + NADH + H(+) = a quinol + NAD(+). It catalyses the reaction a ubiquinone + NADH + H(+) = a ubiquinol + NAD(+). Functionally, alternative NADH-ubiquinone oxidoreductase which catalyzes the oxidation of mitochondrial NADH does not translocate protons across the inner mitochondrial membrane. The sequence is that of Internal alternative NAD(P)H-ubiquinone oxidoreductase A1, mitochondrial (NDA1) from Solanum tuberosum (Potato).